We begin with the raw amino-acid sequence, 233 residues long: Small ribosomal subunit protein uS5 (233 aa).

Residues 1 to 13 (MAEETQNTVATES) show a composition bias toward polar residues. Residues 1–40 (MAEETQNTVATESNNEDRKGRRGQRGEGRRGERRNRREEN) form a disordered region. Residues 15-40 (NEDRKGRRGQRGEGRRGERRNRREEN) are compositionally biased toward basic and acidic residues. The region spanning 45 to 108 (LLDRVVTINR…LDAKKHMFSV (64 aa)) is the S5 DRBM domain.

This sequence belongs to the universal ribosomal protein uS5 family. Part of the 30S ribosomal subunit. Contacts proteins S4 and S8.

Functionally, with S4 and S12 plays an important role in translational accuracy. Its function is as follows. Located at the back of the 30S subunit body where it stabilizes the conformation of the head with respect to the body. This chain is Small ribosomal subunit protein uS5, found in Bifidobacterium longum (strain NCC 2705).